The following is a 252-amino-acid chain: tRNA1(Val) (adenine(37)-N6)-methyltransferase (252 aa).

It belongs to the methyltransferase superfamily. tRNA (adenine-N(6)-)-methyltransferase family.

The protein localises to the cytoplasm. The enzyme catalyses adenosine(37) in tRNA1(Val) + S-adenosyl-L-methionine = N(6)-methyladenosine(37) in tRNA1(Val) + S-adenosyl-L-homocysteine + H(+). Its function is as follows. Specifically methylates the adenine in position 37 of tRNA(1)(Val) (anticodon cmo5UAC). The chain is tRNA1(Val) (adenine(37)-N6)-methyltransferase from Yersinia pseudotuberculosis serotype IB (strain PB1/+).